The sequence spans 258 residues: Distal membrane-arm assembly complex protein 2 (258 aa).

It belongs to the ATP synthase subunit s family. In terms of assembly, interacts with incompletely assembled mitochondrial NADH:ubiquinone oxidoreductase complex (complex I).

The protein localises to the mitochondrion. Its function is as follows. Required for the assembly of the mitochondrial NADH:ubiquinone oxidoreductase complex (complex I). Involved in the assembly of the distal region of complex I. The sequence is that of Distal membrane-arm assembly complex protein 2 (Dmac2) from Mus musculus (Mouse).